The following is a 311-amino-acid chain: Methionyl-tRNA formyltransferase (311 aa).

S109–P112 contacts (6S)-5,6,7,8-tetrahydrofolate.

It belongs to the Fmt family.

The catalysed reaction is L-methionyl-tRNA(fMet) + (6R)-10-formyltetrahydrofolate = N-formyl-L-methionyl-tRNA(fMet) + (6S)-5,6,7,8-tetrahydrofolate + H(+). Its function is as follows. Attaches a formyl group to the free amino group of methionyl-tRNA(fMet). The formyl group appears to play a dual role in the initiator identity of N-formylmethionyl-tRNA by promoting its recognition by IF2 and preventing the misappropriation of this tRNA by the elongation apparatus. This Staphylococcus aureus (strain bovine RF122 / ET3-1) protein is Methionyl-tRNA formyltransferase.